A 184-amino-acid chain; its full sequence is Antigen Sm21.7 (184 aa).

In terms of domain architecture, EF-hand spans L37–E72. Ca(2+) contacts are provided by D50, D52, D54, K56, and E61.

This is Antigen Sm21.7 (SM21.7) from Schistosoma mansoni (Blood fluke).